Reading from the N-terminus, the 145-residue chain is 3-hydroxyacyl-[acyl-carrier-protein] dehydratase FabZ (145 aa).

The active site involves histidine 51.

The protein belongs to the thioester dehydratase family. FabZ subfamily.

It localises to the cytoplasm. The enzyme catalyses a (3R)-hydroxyacyl-[ACP] = a (2E)-enoyl-[ACP] + H2O. In terms of biological role, involved in unsaturated fatty acids biosynthesis. Catalyzes the dehydration of short chain beta-hydroxyacyl-ACPs and long chain saturated and unsaturated beta-hydroxyacyl-ACPs. The protein is 3-hydroxyacyl-[acyl-carrier-protein] dehydratase FabZ of Macrococcus caseolyticus (strain JCSC5402) (Macrococcoides caseolyticum).